We begin with the raw amino-acid sequence, 859 residues long: MAYFSSRLPIALLLIGISGFVCKQYVTVFYGIPAWRNATVPLICATTNRDTWGTVQCLPDNGDYTEIRLNITEAFDAWDNTVTQQAVDDVWRLFETSIKPCVKLTPLCVAMNCSKTETNPGNASSTTTTKPTTTSRGLKTINETDPCIKNDSCTGLGEEEIMQCNFSMTGLRRDELKQYKDTWYSEDLECNNTRKYTSRCYIRTCNTTIIQESCDKHYWDSLRFRYCAPPGFFLLRCNDTNYSGFMPNCSKVVASSCTRMMETQSSTWFGFNGTRAENRTYIYWHEKDNRTIISLNTYYNLSIHCKRPGNKTVVPIRTVSGLLFHSQPINKRPRQAWCWFKGNWTEAIKEVKRTIIKHPRYKGGAKNITSVKLVSEHGKGSDPETTYMWTNCRGEFLYCNMTWFLNWVENKTNTTRRNYAPCHIRQIINTWHKVGKNIYLPPREGELSCNSTVTSLIANINSDNSTTNISVSAEVSELYRLELGDYKLVEITPIGFAPTDVRRYSSVKPRNKRGVMVLGFLGFLAMAGSAMGATSLTLSAQSRTLLAGIVQQQQQPVDVVKRQQELLRLTVWGTKNLQARVTAIEKYLKDQAQLNSWGCAFRQVCHTTVPWPNETLTPNWNNMTWQQWEKQVHFLDANITALLEEAQIQQEKNMYELQKINSWDVFGNWFDLTSWIKYIHLGLYIVAGLVVLRIVVYIVQMLARLRKGYRPVFSSPPSYTQQIPIRKDRGQPANEETEEGGGNDGDYRSWPWQIEYIHFLLRQLRNLLIWLYNGCRTLLLKTFQILHQISTNLQPLRLPVAYLQYGISWFQEALRAAARATGETLASAGETLWEALRRAARAIIAIPRRIRQGLELTLL.

An N-terminal signal peptide occupies residues 1–23 (MAYFSSRLPIALLLIGISGFVCK). The Extracellular portion of the chain corresponds to 24–678 (QYVTVFYGIP…WFDLTSWIKY (655 aa)). N-linked (GlcNAc...) asparagine; by host glycosylation is present at Asn-37. Cys-44 and Cys-57 are joined by a disulfide. N-linked (GlcNAc...) asparagine; by host glycosylation is found at Asn-70, Asn-112, Asn-122, Asn-142, Asn-150, Asn-165, Asn-191, Asn-206, Asn-238, Asn-241, Asn-248, Asn-272, Asn-278, Asn-289, Asn-300, Asn-310, Asn-343, Asn-367, Asn-400, Asn-410, Asn-413, Asn-450, Asn-464, and Asn-468. 5 disulfide bridges follow: Cys-101–Cys-214, Cys-108–Cys-205, Cys-113–Cys-164, Cys-227–Cys-257, and Cys-237–Cys-249. The V1 stretch occupies residues 113–163 (CSKTETNPGNASSTTTTKPTTTSRGLKTINETDPCIKNDSCTGLGEEEIMQ). The interval 164 to 205 (CNFSMTGLRRDELKQYKDTWYSEDLECNNTRKYTSRCYIRTC) is V2. Positions 305–337 (CKRPGNKTVVPIRTVSGLLFHSQPINKRPRQAW) are V3. An intrachain disulfide couples Cys-305 to Cys-338. Intrachain disulfides connect Cys-392/Cys-449 and Cys-399/Cys-422. The interval 399–422 (CNMTWFLNWVENKTNTTRRNYAPC) is V4. Residues 465 to 471 (STTNISV) are V5. A fusion peptide region spans residues 514-534 (GVMVLGFLGFLAMAGSAMGAT). An immunosuppression region spans residues 577–593 (LQARVTAIEKYLKDQAQ). Asn-613, Asn-622, and Asn-638 each carry an N-linked (GlcNAc...) asparagine; by host glycan. A coiled-coil region spans residues 626-647 (QQWEKQVHFLDANITALLEEAQ). The MPER; binding to GalCer stretch occupies residues 659 to 680 (KINSWDVFGNWFDLTSWIKYIH). Residues 679–699 (IHLGLYIVAGLVVLRIVVYIV) form a helical membrane-spanning segment. The Cytoplasmic segment spans residues 700 to 859 (QMLARLRKGY…IRQGLELTLL (160 aa)). The YXXV motif; contains endocytosis signal motif lies at 709 to 712 (YRPV). Residues 715–744 (SPPSYTQQIPIRKDRGQPANEETEEGGGND) are disordered. A lipid anchor (S-palmitoyl cysteine; by host) is attached at Cys-775. The Di-leucine internalization motif motif lies at 858–859 (LL).

The mature envelope protein (Env) consists of a homotrimer of non-covalently associated gp120-gp41 heterodimers. The resulting complex protrudes from the virus surface as a spike. There seems to be as few as 10 spikes on the average virion. Interacts with human CD4, CCR5 and CXCR4, to form a P4HB/PDI-CD4-CXCR4-gp120 complex. Gp120 also interacts with the C-type lectins CD209/DC-SIGN and CLEC4M/DC-SIGNR (collectively referred to as DC-SIGN(R)). Gp120 and gp41 interact with GalCer. As to quaternary structure, the mature envelope protein (Env) consists of a homotrimer of non-covalently associated gp120-gp41 heterodimers. The resulting complex protrudes from the virus surface as a spike. There seems to be as few as 10 spikes on the average virion. Post-translationally, specific enzymatic cleavages in vivo yield mature proteins. Envelope glycoproteins are synthesized as an inactive precursor that is heavily N-glycosylated and processed likely by host cell furin in the Golgi to yield the mature SU and TM proteins. The cleavage site between SU and TM requires the minimal sequence [KR]-X-[KR]-R. Palmitoylation of the transmembrane protein and of Env polyprotein (prior to its proteolytic cleavage) is essential for their association with host cell membrane lipid rafts. Palmitoylation is therefore required for envelope trafficking to classical lipid rafts, but not for viral replication.

The protein localises to the virion membrane. It is found in the host cell membrane. Its subcellular location is the host endosome membrane. The surface protein gp120 (SU) attaches the virus to the host lymphoid cell by binding to the primary receptor CD4. This interaction induces a structural rearrangement creating a high affinity binding site for a chemokine coreceptor like CXCR4 and/or CCR5. This peculiar 2 stage receptor-interaction strategy allows gp120 to maintain the highly conserved coreceptor-binding site in a cryptic conformation, protected from neutralizing antibodies. Since CD4 also displays a binding site for the disulfide-isomerase P4HB/PDI, a P4HB/PDI-CD4-CXCR4-gp120 complex may form. In that complex, P4HB/PDI could reach and reduce gp120 disulfide bonds, causing major conformational changes in gp120. TXN, another PDI family member could also be involved in disulfide rearrangements in Env during fusion. These changes are transmitted to the transmembrane protein gp41 and are thought to activate its fusogenic potential by unmasking its fusion peptide. Its function is as follows. The surface protein gp120 is a ligand for CD209/DC-SIGN and CLEC4M/DC-SIGNR, which are respectively found on dendritic cells (DCs), and on endothelial cells of liver sinusoids and lymph node sinuses. These interactions allow capture of viral particles at mucosal surfaces by these cells and subsequent transmission to permissive cells. DCs are professional antigen presenting cells, critical for host immunity by inducing specific immune responses against a broad variety of pathogens. They act as sentinels in various tissues where they take up antigen, process it, and present it to T-cells following migration to lymphoid organs. HIV subverts the migration properties of dendritic cells to gain access to CD4+ T-cells in lymph nodes. Virus transmission to permissive T-cells occurs either in trans (without DCs infection, through viral capture and transmission), or in cis (following DCs productive infection, through the usual CD4-gp120 interaction), thereby inducing a robust infection. In trans infection, bound virions remain infectious over days and it is proposed that they are not degraded, but protected in non-lysosomal acidic organelles within the DCs close to the cell membrane thus contributing to the viral infectious potential during DCs' migration from the periphery to the lymphoid tissues. On arrival at lymphoid tissues, intact virions recycle back to DCs' cell surface allowing virus transmission to CD4+ T-cells. Virion capture also seems to lead to MHC-II-restricted viral antigen presentation, and probably to the activation of HIV-specific CD4+ cells. In terms of biological role, the transmembrane protein gp41 (TM) acts as a class I viral fusion protein. Under the current model, the protein has at least 3 conformational states: pre-fusion native state, pre-hairpin intermediate state, and post-fusion hairpin state. During fusion of viral and target intracellular membranes, the coiled coil regions (heptad repeats) assume a trimer-of-hairpins structure, positioning the fusion peptide in close proximity to the C-terminal region of the ectodomain. The formation of this structure appears to drive apposition and subsequent fusion of viral and target cell membranes. Complete fusion occurs in host cell endosomes and is dynamin-dependent, however some lipid transfer might occur at the plasma membrane. The virus undergoes clathrin-dependent internalization long before endosomal fusion, thus minimizing the surface exposure of conserved viral epitopes during fusion and reducing the efficacy of inhibitors targeting these epitopes. Membranes fusion leads to delivery of the nucleocapsid into the cytoplasm. Functionally, the envelope glycoprotein gp160 precursor down-modulates cell surface CD4 antigen by interacting with it in the endoplasmic reticulum and blocking its transport to the cell surface. The gp120-gp41 heterodimer seems to contribute to T-cell depletion during HIV-1 infection. The envelope glycoproteins expressed on the surface of infected cells induce apoptosis through an interaction with uninfected cells expressing the receptor (CD4) and the coreceptors CXCR4 or CCR5. This type of bystander killing may be obtained by at least three distinct mechanisms. First, the interaction between the 2 cells can induce cellular fusion followed by nuclear fusion within the syncytium. Syncytia are condemned to die from apoptosis. Second, the 2 interacting cells may not fuse entirely and simply exchange plasma membrane lipids, after a sort of hemifusion process, followed by rapid death. Third, it is possible that virus-infected cells, on the point of undergoing apoptosis, fuse with CD4-expressing cells, in which case apoptosis is rapidly transmitted from one cell to the other and thus occurs in a sort of contagious fashion. Its function is as follows. The gp120-gp41 heterodimer allows rapid transcytosis of the virus through CD4 negative cells such as simple epithelial monolayers of the intestinal, rectal and endocervical epithelial barriers. Both gp120 and gp41 specifically recognize glycosphingolipids galactosyl-ceramide (GalCer) or 3' sulfo-galactosyl-ceramide (GalS) present in the lipid rafts structures of epithelial cells. Binding to these alternative receptors allows the rapid transcytosis of the virus through the epithelial cells. This transcytotic vesicle-mediated transport of virions from the apical side to the basolateral side of the epithelial cells does not involve infection of the cells themselves. The sequence is that of Envelope glycoprotein gp160 (env) from Human immunodeficiency virus type 2 subtype B (isolate D205) (HIV-2).